Reading from the N-terminus, the 186-residue chain is MKLIVGLGNPGREYELTRHNIGFMAIDELAKRWNISLNEQKFKGVFGAGFVNGEKVILLKPLTYMNLSGESIRPLMDYYKIDVEDFVVLYDDLDIPVGKLRLRMKGSAGGHNGVKSTISHLGTQEFQRIRMGIDRPKNGMKVVDYVLGRFTSEEIPDVNHSIEKAADACEEWLNKPFLQIMNTFNS.

Y14 is a tRNA binding site. The active-site Proton acceptor is the H19. The tRNA site is built by Y64, N66, and N112.

The protein belongs to the PTH family. In terms of assembly, monomer.

The protein resides in the cytoplasm. It carries out the reaction an N-acyl-L-alpha-aminoacyl-tRNA + H2O = an N-acyl-L-amino acid + a tRNA + H(+). Hydrolyzes ribosome-free peptidyl-tRNAs (with 1 or more amino acids incorporated), which drop off the ribosome during protein synthesis, or as a result of ribosome stalling. Its function is as follows. Catalyzes the release of premature peptidyl moieties from peptidyl-tRNA molecules trapped in stalled 50S ribosomal subunits, and thus maintains levels of free tRNAs and 50S ribosomes. In Bacillus cereus (strain Q1), this protein is Peptidyl-tRNA hydrolase.